Reading from the N-terminus, the 505-residue chain is Putative thymidine phosphorylase (505 aa).

Belongs to the thymidine/pyrimidine-nucleoside phosphorylase family. Type 2 subfamily.

It carries out the reaction thymidine + phosphate = 2-deoxy-alpha-D-ribose 1-phosphate + thymine. This Tolumonas auensis (strain DSM 9187 / NBRC 110442 / TA 4) protein is Putative thymidine phosphorylase.